The sequence spans 763 residues: Putative alpha-1,3-mannosyltransferase MNN15 (763 aa).

Residues Met1–Lys7 lie on the Cytoplasmic side of the membrane. Residues Ile8–Val28 form a helical membrane-spanning segment. Topologically, residues Asp29–Ile763 are lumenal. Residues Asn71, Asn157, and Asn169 are each glycosylated (N-linked (GlcNAc...) asparagine). The tract at residues Leu617–Pro659 is disordered. Over residues Lys649–Pro659 the composition is skewed to basic and acidic residues.

The protein belongs to the MNN1/MNT family.

It is found in the golgi apparatus membrane. Its pathway is protein modification; protein glycosylation. Its function is as follows. Responsible for addition of the terminal mannose residues to the outer chain of core N-linked polysaccharides and to O-linked mannotriose. Implicated in late Golgi modifications. The sequence is that of Putative alpha-1,3-mannosyltransferase MNN15 (MNN15) from Candida albicans (strain SC5314 / ATCC MYA-2876) (Yeast).